Consider the following 398-residue polypeptide: Carboxyaminopropylagmatine dehydrogenase (398 aa).

The protein belongs to the saccharopine dehydrogenase family.

The enzyme catalyses N(1)-[(S)-3-amino-3-carboxypropyl]agmatine + NADP(+) + H2O = L-aspartate 4-semialdehyde + agmatine + NADPH + H(+). The protein operates within amine and polyamine biosynthesis; spermidine biosynthesis. Its function is as follows. Dehydrogenase involved in the biosynthesis of spermidine via the carboxyaminopropylagmatine (CAPA) pathway. Catalyzes the reductive condensation of agmatine and L-aspartate-beta-semialdehyde (ASA) into CAPA. Shows activity toward putrescine and 1,3-diaminopropane, but the catalytic efficiency is three to four orders of magnitude lower than that for agmatine. Cannot use cadaverine or spermidine. This Synechocystis sp. (strain ATCC 27184 / PCC 6803 / Kazusa) protein is Carboxyaminopropylagmatine dehydrogenase.